A 112-amino-acid polypeptide reads, in one-letter code: UPF0342 protein SGO_1370 (112 aa).

The protein belongs to the UPF0342 family.

This is UPF0342 protein SGO_1370 from Streptococcus gordonii (strain Challis / ATCC 35105 / BCRC 15272 / CH1 / DL1 / V288).